A 931-amino-acid chain; its full sequence is Netrin receptor UNC5C (931 aa).

Positions 1 to 40 (MRKGLRATAARCGLGLGYLLQMLVLPALALLSASGTGSAA) are cleaved as a signal peptide. At 41-380 (QDDEFFHELP…APDSDDVALY (340 aa)) the chain is on the extracellular side. Residues 62 to 159 (PHFLIEPEEA…AGTTKSRKAY (98 aa)) enclose the Ig-like domain. 9 disulfides stabilise this stretch: Cys83–Cys144, Cys95–Cys142, Cys188–Cys239, Cys272–Cys309, Cys276–Cys313, Cys287–Cys299, Cys328–Cys362, Cys332–Cys367, and Cys340–Cys352. In terms of domain architecture, Ig-like C2-type spans 161 to 256 (RIAYLRKTFE…KRKSTTATVI (96 aa)). Asn236 carries N-linked (GlcNAc...) asparagine glycosylation. TSP type-1 domains are found at residues 260–314 (NGGW…TLCP) and 316–368 (DGRW…GLCM). N-linked (GlcNAc...) asparagine glycosylation is present at Asn361. The chain crosses the membrane as a helical span at residues 381-401 (VGIVIAVTVCLAITVVVALFV). The Cytoplasmic segment spans residues 402–931 (YRKNHRDFES…VVSLAAEGQY (530 aa)). A required for netrin-mediated axon repulsion of neuronal growth cones region spans residues 402–931 (YRKNHRDFES…VVSLAAEGQY (530 aa)). Phosphoserine is present on Ser502. The region spanning 530–673 (CTAFGTFNSL…LSTYALVGQS (144 aa)) is the ZU5 domain. Tyr568 carries the post-translational modification Phosphotyrosine. The tract at residues 694–712 (SLEYSIRVYCLDDTQDALK) is interaction with DCC. The region spanning 850–929 (QKLCSSLDAP…ETVVSLAAEG (80 aa)) is the Death domain.

It belongs to the unc-5 family. As to quaternary structure, interacts with DCC (via cytoplasmic domain). Interacts (tyrosine phosphorylated form) with PTPN11. Interacts (via extracellular domain) with FLRT3 (via extracellular domain). Interacts (via Ig-like C2-type domain) with DSCAM (via extracellular domain). Interacts (via death domain) with DAPK1. Interacts (via cytoplasmic domain) with TUBB3; this interaction is decreased by NTN1/Netrin-1. In terms of processing, phosphorylated on different cytoplasmic tyrosine residues. Phosphorylation of Tyr-568 leads to an interaction with PTPN11 phosphatase, suggesting that its activity is regulated by phosphorylation/dephosphorylation. Tyrosine phosphorylation is netrin-dependent. Post-translationally, proteolytically cleaved by caspases during apoptosis. The cleavage does not take place when the receptor is associated with netrin ligand. Its cleavage by caspases is required to induce apoptosis. Expressed in cortical and cerebellar neurons, including cells of the external and internal granular layer and of the Purkinje cell layer (at protein level). Mainly expressed in regions of differentiating neurons. Highly expressed in brain and lung. Expressed in the cerebellum and the neurons of the hippocampus, with enrichment in neurons of the CA3 hippocampal pyramidal layer. Weakly expressed in testis, ovary, spleen, thymus and bladder. Expressed at very low level in kidney, intestine and salivary gland.

Its subcellular location is the cell membrane. It is found in the cell surface. The protein resides in the synapse. It localises to the synaptosome. The protein localises to the cell projection. Its subcellular location is the dendrite. It is found in the axon. The protein resides in the growth cone. It localises to the lamellipodium. The protein localises to the filopodium. Its function is as follows. Receptor for netrin required for axon guidance. Mediates axon repulsion of neuronal growth cones in the developing nervous system upon ligand binding. NTN1/Netrin-1 binding might cause dissociation of UNC5C from polymerized TUBB3 in microtubules and thereby lead to increased microtubule dynamics and axon repulsion. Axon repulsion in growth cones may also be caused by its association with DCC that may trigger signaling for repulsion. Might also collaborate with DSCAM in NTN1-mediated axon repulsion independently of DCC. Also involved in corticospinal tract axon guidance independently of DCC. Involved in dorsal root ganglion axon projection towards the spinal cord. It also acts as a dependence receptor required for apoptosis induction when not associated with netrin ligand. The sequence is that of Netrin receptor UNC5C (Unc5c) from Mus musculus (Mouse).